Consider the following 325-residue polypeptide: Ribosomal RNA small subunit methyltransferase H (325 aa).

S-adenosyl-L-methionine contacts are provided by residues 38-40 (GGY), D55, F82, D103, and Q110. 2 disordered regions span residues 256 to 275 (SGGDAAGSRHRPAPTAAARA) and 281 to 307 (PARKVRPGKAEEARNPRARSATLRSAV).

Belongs to the methyltransferase superfamily. RsmH family.

Its subcellular location is the cytoplasm. It carries out the reaction cytidine(1402) in 16S rRNA + S-adenosyl-L-methionine = N(4)-methylcytidine(1402) in 16S rRNA + S-adenosyl-L-homocysteine + H(+). In terms of biological role, specifically methylates the N4 position of cytidine in position 1402 (C1402) of 16S rRNA. This chain is Ribosomal RNA small subunit methyltransferase H, found in Sphingopyxis alaskensis (strain DSM 13593 / LMG 18877 / RB2256) (Sphingomonas alaskensis).